A 133-amino-acid chain; its full sequence is Large ribosomal subunit protein bL17 (133 aa).

Belongs to the bacterial ribosomal protein bL17 family. As to quaternary structure, part of the 50S ribosomal subunit. Contacts protein L32.

The chain is Large ribosomal subunit protein bL17 from Verminephrobacter eiseniae (strain EF01-2).